Reading from the N-terminus, the 376-residue chain is Lipoprotein p33 (376 aa).

Residues 1–30 (MKIKKIKLLKALALTGAFGIVATVPVIVSS) form the signal peptide. Residue C31 is the site of N-palmitoyl cysteine attachment. A lipid anchor (S-diacylglycerol cysteine) is attached at C31. The interval 33-59 (STDNNGGTGDNNTGGGGSGTDQQQGTT) is disordered. Over residues 38–51 (GGTGDNNTGGGGSG) the composition is skewed to gly residues.

This sequence belongs to the p35 lipoprotein family.

Its subcellular location is the cell membrane. The protein is Lipoprotein p33 of Malacoplasma penetrans (strain HF-2) (Mycoplasma penetrans).